Consider the following 199-residue polypeptide: RNA-binding protein, mRNA-processing factor 2a (199 aa).

Residues 20–97 enclose the RRM domain; the sequence is RTLFVSGLPV…QTLRLEFAKA (78 aa).

Interacts with Bucky ball (BUC); to mediate Balbiani body formation and oocyte polarity during early oogenesis.

It localises to the cytoplasm. Its subcellular location is the nucleus. The protein localises to the stress granule. Functionally, RNA-binding protein involved in the regulation of smooth muscle cell differentiation and proliferation in the gastrointestinal system. RNA-binding protein localized in Balbiani body (electron-dense aggregates in the oocyte) and germ plasm during oogenesis, and may be required to maintain germ plasm mRNA translational repression. Translational regulator during topographic map formation in the visual system. Establishes oocyte polarity through interaction with Bucky ball (BUC). Acts as a pre-mRNA alternative splicing regulator. Mediates ACTN1 and FLNB alternative splicing. Likely binds to mRNA tandem CAC trinucleotide or CA dinucleotide motifs. This is RNA-binding protein, mRNA-processing factor 2a from Danio rerio (Zebrafish).